Reading from the N-terminus, the 231-residue chain is MVVYLVGAGPGDPELITLKAVNVLKKADVVLYDKPANEEILKYAEGAKLIYVGKQAGHHYKSQNEINTLLVEEAKENDLVVRLKGGDPFVFGRGGEEILALVEEGIDFELVPGVTSAIGVPTTIGLPVTHRGVATSFTVVTGHEDPTKCKKQVGWDFKADTIVILMGIGNLAENTAEIMKHKDPETPVCVIENGTMEGQRIITGTLENIAGKDIKPPALVVLEMLSMFLKK.

S-adenosyl-L-homocysteine contacts are provided by residues P10, 85–87, 115–116, M166, and A218; these read GGD and TS.

The protein belongs to the precorrin methyltransferase family. Homodimer.

The enzyme catalyses uroporphyrinogen III + 2 S-adenosyl-L-methionine = precorrin-2 + 2 S-adenosyl-L-homocysteine + H(+). It catalyses the reaction uroporphyrinogen III + S-adenosyl-L-methionine = precorrin-1 + S-adenosyl-L-homocysteine + H(+). The catalysed reaction is precorrin-1 + S-adenosyl-L-methionine = precorrin-2 + S-adenosyl-L-homocysteine. It participates in cofactor biosynthesis; adenosylcobalamin biosynthesis; precorrin-2 from uroporphyrinogen III: step 1/1. Does not show substrate inhibition at uroporphyrinogen III concentrations of up to 20 uM, in contrast to SUMT from Sinorhizobium (previously believed to be P.denitrificans). Functionally, catalyzes the two successive C-2 and C-7 methylation reactions involved in the conversion of uroporphyrinogen III to precorrin-2 via the intermediate formation of precorrin-1. It is a step in the biosynthesis of both cobalamin (vitamin B12) and coenzyme F430. This chain is Uroporphyrinogen-III C-methyltransferase (cobA), found in Methanobacterium ivanovii.